Consider the following 338-residue polypeptide: Popeye domain-containing protein 1 (338 aa).

The Extracellular portion of the chain corresponds to 1–40; the sequence is MATESILITTLPMDLNSQINNVTFGLNENETLCENWREIH. 2 N-linked (GlcNAc...) asparagine glycosylation sites follow: N21 and N29. A helical membrane pass occupies residues 41–61; the sequence is HLVFHLANTCFAAGLVIPSTL. At 62-65 the chain is on the cytoplasmic side; that stretch reads NLHM. Residues 66-86 traverse the membrane as a helical segment; it reads ILLRGMLCLGCIFFIIWAILF. The Extracellular segment spans residues 87–91; that stretch reads RCALD. A helical transmembrane segment spans residues 92 to 112; sequence IMIWNATFLSMNFMHFIYLVY. Topologically, residues 113-338 are cytoplasmic; the sequence is KKRPIKIEKD…VGPLSHAVFC (226 aa).

It belongs to the popeye family.

It localises to the lateral cell membrane. The protein resides in the cell junction. It is found in the tight junction. Its subcellular location is the membrane. The protein localises to the cell membrane. It localises to the sarcolemma. The protein resides in the caveola. In terms of biological role, cell adhesion molecule involved in the establishment and/or maintenance of cell integrity. May play a role in vamp3-mediated vesicular transport and recycling of different receptor molecules. May be involved in the formation and regulation of the tight junction (TJ) paracellular permeability barrier in epithelial cells. May induce primordial adhesive contact and aggregation of epithelial cells in a Ca(2+)-independent manner. May be involved in epithelial movement during corneal sheet formation and regeneration. May play a role in the regulation of cell shape and movement by modulating the Rho-GTPase activity. May be involved in skeletal muscle and heart development as well as in the maintenance of heart function. May also be involved in striated muscle regeneration and in the regulation of cell spreading. This chain is Popeye domain-containing protein 1 (popdc1), found in Xenopus tropicalis (Western clawed frog).